Reading from the N-terminus, the 388-residue chain is Chorismate synthase (388 aa).

Residues Arg-39 and Arg-45 each coordinate NADP(+). The interval 95–118 is disordered; that stretch reads EKNEKSRRVSRPRPGHADLVGGMK. FMN contacts are provided by residues 130-132, 251-252, Gly-296, 311-315, and Arg-337; these read RSS, NA, and KPIPT.

It belongs to the chorismate synthase family. In terms of assembly, homotetramer. FMNH2 is required as a cofactor.

The catalysed reaction is 5-O-(1-carboxyvinyl)-3-phosphoshikimate = chorismate + phosphate. Its pathway is metabolic intermediate biosynthesis; chorismate biosynthesis; chorismate from D-erythrose 4-phosphate and phosphoenolpyruvate: step 7/7. Its function is as follows. Catalyzes the anti-1,4-elimination of the C-3 phosphate and the C-6 proR hydrogen from 5-enolpyruvylshikimate-3-phosphate (EPSP) to yield chorismate, which is the branch point compound that serves as the starting substrate for the three terminal pathways of aromatic amino acid biosynthesis. This reaction introduces a second double bond into the aromatic ring system. The protein is Chorismate synthase of Listeria innocua serovar 6a (strain ATCC BAA-680 / CLIP 11262).